The sequence spans 393 residues: Anhydro-N-acetylmuramic acid kinase (393 aa).

9 to 16 (GTSADGVD) is a binding site for ATP.

Belongs to the anhydro-N-acetylmuramic acid kinase family.

It catalyses the reaction 1,6-anhydro-N-acetyl-beta-muramate + ATP + H2O = N-acetyl-D-muramate 6-phosphate + ADP + H(+). It participates in amino-sugar metabolism; 1,6-anhydro-N-acetylmuramate degradation. The protein operates within cell wall biogenesis; peptidoglycan recycling. Functionally, catalyzes the specific phosphorylation of 1,6-anhydro-N-acetylmuramic acid (anhMurNAc) with the simultaneous cleavage of the 1,6-anhydro ring, generating MurNAc-6-P. Is required for the utilization of anhMurNAc either imported from the medium or derived from its own cell wall murein, and thus plays a role in cell wall recycling. This is Anhydro-N-acetylmuramic acid kinase from Acidithiobacillus ferrooxidans (strain ATCC 23270 / DSM 14882 / CIP 104768 / NCIMB 8455) (Ferrobacillus ferrooxidans (strain ATCC 23270)).